A 356-amino-acid chain; its full sequence is 16-methoxy-2,3-dihydro-3-hydroxytabersonine synthase (356 aa).

Zn(2+) is bound by residues C49, H71, C102, C105, C108, C116, and C162. Position 187–192 (187–192 (GLGAVG)) interacts with NAD(+).

The protein belongs to the zinc-containing alcohol dehydrogenase family. Zn(2+) is required as a cofactor. As to expression, expressed in leaf epidermis.

The catalysed reaction is (3R)-3-hydroxy-16-methoxy-2,3-dihydrotabersonine + A = (3R)-1,2-didehydro-3-hydroxy-16-methoxy-2,3-dihydrotabersonine + AH2. It carries out the reaction (3R)-3-hydroxy-2,3-dihydrotabersonine + A = (3R)-1,2-didehydro-3-hydroxy-2,3-dihydrotabersonine + AH2. Its pathway is alkaloid biosynthesis; vindoline biosynthesis. In terms of biological role, converts the unstable imine alcohols produced by CYP71D1V2/T3O into 3-hydroxy-16-methoxy-2,3-dihydrotabersonine or 3-hydroxy-2,3-dihydrotabersonine. The chain is 16-methoxy-2,3-dihydro-3-hydroxytabersonine synthase from Catharanthus roseus (Madagascar periwinkle).